Reading from the N-terminus, the 769-residue chain is MHSNLGLAGLAGLLATASVCLSAPADQNITSDTYCYGQSPPVYPSPEGSGTGSWAAAYAKAKNFVAQLTPEEKVNLTAGTDANNGCSGNIAAIPRLNFPGLCVSDAGNGLRGTDYVSSWPSGLHVGASWSKALAKQRAIHMAKEFRKKGVNVILGPVVGPLGRVAEAGRNWEGFSNDPYLSGALVYETVDGAQSVGVATCTKHYILNEQETNRNPGTEDGVDIAAVSSNIDDKTMHELYLWPFQDAVLAGSASIMCSYNRVNNSYGCQNSKTLNGLLKTELGFQGYVMTDWGAQHAGIAGANAGLDMVMPSTETWGANLTTAISNGTMDASRLDDMAIRIIASWYQMNQNSDSPSPGVGMPTNMYAPHQRVIGREASSKQTLLRGAIEGHVLVKNTNSALPLKSPQLLSVFGYDAKGPDALKQNFNWLSYSPAIQENHTLWVGGGSGANNAAYVDAPIDAIKRQAYEDGTSVLYDLSSEDPDVDPTTDACLVFINSYATEGWDRPGLADKSSDSLVKNVAGKCANTIVTIHNAGIRVIGDWIDHENVTAVIFAHLPGQDSGRALVELLYGRANPSGKLPYTVAKKAEDYGSLLHPSLPETPYGLFPQSDFDEGVYIDYRAFDKANITPQFEFGFGLSYTAFEYSGLRISNPKKSPQYPPSAAIQQGGNPHLWDKTVTVSAEVKNTGRVAGAEVAQLYIGIPNGPVRQLRGFEKVDVSAGETTQVKFALNRRDLSTWDVEAQQWSLQRGTYRVYVGRSSRDLPLTGSFTL.

A signal peptide spans 1–22 (MHSNLGLAGLAGLLATASVCLS). 3 N-linked (GlcNAc...) asparagine glycosylation sites follow: N28, N75, and N262. The active site involves D290. N-linked (GlcNAc...) asparagine glycosylation is found at N318, N325, N437, and N546.

This sequence belongs to the glycosyl hydrolase 3 family.

It is found in the secreted. The enzyme catalyses Hydrolysis of terminal, non-reducing beta-D-glucosyl residues with release of beta-D-glucose.. It functions in the pathway glycan metabolism; cellulose degradation. In terms of biological role, beta-glucosidases are one of a number of cellulolytic enzymes involved in the degradation of cellulosic biomass. Catalyzes the last step releasing glucose from the inhibitory cellobiose. The polypeptide is Probable beta-glucosidase M (bglM) (Neosartorya fischeri (strain ATCC 1020 / DSM 3700 / CBS 544.65 / FGSC A1164 / JCM 1740 / NRRL 181 / WB 181) (Aspergillus fischerianus)).